A 911-amino-acid chain; its full sequence is MASSQTSQTVAAHVPFADLCSTLERIQKGKDRAEKIRHFKEFLDSWRKFHDALHKNRKDVTDSFYPAMRLILPQLERERMAYGIKETMLAKLYIELLNLPREGKDAQKLLNYRTPSGARTDAGDFAMIAYFVLKPRCLQKGSLTIQQVNELLDLVASNNSGKKKDLVKKSLLQLITQSSALEQKWLIRMIIKDLKLGISQQTIFSIFHNDAVELHNVTTDLEKVCRQLHDPSVGLSDISITLFSAFKPMLAAVADVERVEKDMKQQSFYIETKLDGERMQMHKDGALYRYFSRNGYNYTDQFGESPQEGSLTPFIHNAFGTDVQACILDGEMMAYNPTTQTFMQKGVKFDIKRMVEDSGLQTCYSVFDVLMVNKKKLGRETLRKRYEILSSTFTPIQGRIEIVQKTQAHTKKEVVDALNDAIDKREEGIMVKHPLSIYKPDKRGEGWLKIKPEYVSGLMDELDVLIVGGYWGKGSRGGMMSHFLCAVAETPPPGDRPSVFHTLCRVGSGYTMKELYDLGLKLAKYWKPFHKKSPPSSILCGTEKPEVYIEPQNSVIVQIKAAEIVPSDMYKTGSTLRFPRIEKIRDDKEWHECMTLGDLEQLRGKASGKLATKHLHVGDDDEPREKRRKPISKTKKAIRIIEHLKAPNLSNVNKVSNVFEDVEFCVMSGLDGYPKADLENRIAEFGGYIVQNPGPDTYCVIAGSENVRVKNIISSDKNDVVKPEWLLECFKTKTCVPWQPRFMIHMCPSTKQHFAREYDCYGDSYFVDTDLDQLKEVFLGIKPSEQQTPEEMAPVIADLECRYSWDHSPLSMFRHYTIYLDLYAVINDLSSRIEATRLGITALELRFHGAKVVSCLSEGVSHVIIGEDQRRVTDFKIFRRMLKKKFKILQESWVSDSVDKGELQEENQYLL.

Glu271, Thr272, Lys273, Leu274, Arg278, Glu331, Lys345, Phe367, Glu427, Lys432, Lys449, and Lys451 together coordinate ATP. Residue Lys273 is the N6-AMP-lysine intermediate of the active site. Glu331 provides a ligand contact to Mg(2+). Glu427 contacts Mg(2+). Residues 610–620 (LATKHLHVGDD) are required for catalytic activity. 2 consecutive BRCT domains span residues 654–743 (KVSN…PRFM) and 808–911 (SPLS…QYLL).

The protein belongs to the ATP-dependent DNA ligase family. Interacts with XRCC4; the LIG4-XRCC4 subcomplex has a 1:2 stoichiometry and XRCC4 is required for LIG4 stability. Component of the core long-range non-homologous end joining (NHEJ) complex (also named DNA-PK complex) composed of PRKDC, LIG4, XRCC4, XRCC6/Ku70, XRCC5/Ku86 and NHEJ1/XLF. Additional component of the NHEJ complex includes PAXX. Following autophosphorylation, PRKDC dissociates from DNA, leading to formation of the short-range NHEJ complex, composed of LIG4, XRCC4, XRCC6/Ku70, XRCC5/Ku86 and NHEJ1/XLF. Interacts with DCLRE1C; the interaction is direct. Interacts with APLF. Mg(2+) is required as a cofactor.

The protein resides in the nucleus. The enzyme catalyses ATP + (deoxyribonucleotide)n-3'-hydroxyl + 5'-phospho-(deoxyribonucleotide)m = (deoxyribonucleotide)n+m + AMP + diphosphate.. DNA ligase involved in DNA non-homologous end joining (NHEJ); required for double-strand break (DSB) repair and V(D)J recombination. Catalyzes the NHEJ ligation step of the broken DNA during DSB repair by resealing the DNA breaks after the gap filling is completed. Joins single-strand breaks in a double-stranded polydeoxynucleotide in an ATP-dependent reaction. LIG4 is mechanistically flexible: it can ligate nicks as well as compatible DNA overhangs alone, while in the presence of XRCC4, it can ligate ends with 2-nucleotides (nt) microhomology and 1-nt gaps. Forms a subcomplex with XRCC4; the LIG4-XRCC4 subcomplex is responsible for the NHEJ ligation step and XRCC4 enhances the joining activity of LIG4. Binding of the LIG4-XRCC4 complex to DNA ends is dependent on the assembly of the DNA-dependent protein kinase complex DNA-PK to these DNA ends. LIG4 regulates nuclear localization of XRCC4. In Mus musculus (Mouse), this protein is DNA ligase 4.